The following is a 376-amino-acid chain: Protein insensitive (376 aa).

Residues 50 to 79 (QVEVENRALRDKVRYLEAKLQQHKDLLSQI) adopt a coiled-coil conformation. The region spanning 258–356 (GPNNTCVPAS…TKCADENKMM (99 aa)) is the BEN domain.

Homodimer. Interacts (via BEN domain) with Su(H). Interacts with Cp190.

The protein resides in the nucleus. In terms of biological role, can act as both a transcriptional repressor and corepressor. Represses the expression of genes involved in neural development and preferentially binds palindromic sequence 5'-CCAATTGG-3' to mediate transcriptional repression. Acts as a corepressor for suppressor of hairless (Su(H)) and inhibits Notch signaling during peripheral nervous system development. This chain is Protein insensitive (insv), found in Drosophila melanogaster (Fruit fly).